The primary structure comprises 85 residues: Coiled-coil-helix-coiled-coil-helix domain-containing protein 7 (85 aa).

A CHCH domain is found at 13–55; the sequence is SNPCLEETDASTKCMDDNRYEKDLCTPYFVKYKNCRKFWNGIM. 2 consecutive short sequence motifs (cx9C motif) follow at residues 16–26 and 37–47; these read CLEETDASTKC and CTPYFVKYKNC. 2 disulfide bridges follow: Cys-16/Cys-47 and Cys-26/Cys-37.

Belongs to the CHCHD7 family.

The protein localises to the mitochondrion intermembrane space. This Xenopus tropicalis (Western clawed frog) protein is Coiled-coil-helix-coiled-coil-helix domain-containing protein 7 (chchd7).